The chain runs to 446 residues: NADH-quinone oxidoreductase subunit D (446 aa).

This sequence belongs to the complex I 49 kDa subunit family. As to quaternary structure, NDH-1 is composed of 14 different subunits. Subunits NuoB, C, D, E, F, and G constitute the peripheral sector of the complex.

Its subcellular location is the cell membrane. It catalyses the reaction a quinone + NADH + 5 H(+)(in) = a quinol + NAD(+) + 4 H(+)(out). NDH-1 shuttles electrons from NADH, via FMN and iron-sulfur (Fe-S) centers, to quinones in the respiratory chain. The immediate electron acceptor for the enzyme in this species is believed to be a menaquinone. Couples the redox reaction to proton translocation (for every two electrons transferred, four hydrogen ions are translocated across the cytoplasmic membrane), and thus conserves the redox energy in a proton gradient. The protein is NADH-quinone oxidoreductase subunit D of Nocardioides sp. (strain ATCC BAA-499 / JS614).